Consider the following 151-residue polypeptide: UPF0756 membrane protein HS_0993 (151 aa).

4 helical membrane passes run M1–L21, Y52–G72, A81–G101, and I123–L143.

Belongs to the UPF0756 family.

The protein localises to the cell membrane. The chain is UPF0756 membrane protein HS_0993 from Histophilus somni (strain 129Pt) (Haemophilus somnus).